The sequence spans 420 residues: Gamma-glutamyl phosphate reductase (420 aa).

This sequence belongs to the gamma-glutamyl phosphate reductase family.

Its subcellular location is the cytoplasm. The catalysed reaction is L-glutamate 5-semialdehyde + phosphate + NADP(+) = L-glutamyl 5-phosphate + NADPH + H(+). It functions in the pathway amino-acid biosynthesis; L-proline biosynthesis; L-glutamate 5-semialdehyde from L-glutamate: step 2/2. In terms of biological role, catalyzes the NADPH-dependent reduction of L-glutamate 5-phosphate into L-glutamate 5-semialdehyde and phosphate. The product spontaneously undergoes cyclization to form 1-pyrroline-5-carboxylate. In Neisseria gonorrhoeae (strain ATCC 700825 / FA 1090), this protein is Gamma-glutamyl phosphate reductase.